The sequence spans 346 residues: Phosphate acyltransferase (346 aa).

It belongs to the PlsX family. In terms of assembly, homodimer. Probably interacts with PlsY.

Its subcellular location is the cytoplasm. The enzyme catalyses a fatty acyl-[ACP] + phosphate = an acyl phosphate + holo-[ACP]. It functions in the pathway lipid metabolism; phospholipid metabolism. In terms of biological role, catalyzes the reversible formation of acyl-phosphate (acyl-PO(4)) from acyl-[acyl-carrier-protein] (acyl-ACP). This enzyme utilizes acyl-ACP as fatty acyl donor, but not acyl-CoA. The protein is Phosphate acyltransferase of Brucella suis biovar 1 (strain 1330).